A 203-amino-acid polypeptide reads, in one-letter code: Akirin-2 (203 aa).

Residues Ser18 and Ser21 each carry the phosphoserine modification. The short motif at 22–27 is the Nuclear localization signal element; that stretch reads PKRRRC. Ser57 carries the post-translational modification Phosphoserine. An SYVS motif motif is present at residues 200–203; that stretch reads SYVS.

This sequence belongs to the akirin family. Homodimer. Interacts with IPO9; the interaction is direct. Associates (via SYVS motif) with 20S and 26S proteasomes. Interacts with SMARCD1; promoting SWI/SNF complex recruitment. Interacts with NFKBIZ. Interacts with YWHAB. In terms of processing, polyubiquitinated. Polyubiquitination is dependent of UBR5 that extends pre-ubiquitinated AKIRIN2. As to expression, widely expressed with the highest expression in peripheral blood leukocytes.

The protein resides in the nucleus. It is found in the cytoplasm. It localises to the membrane. Functionally, molecular adapter that acts as a bridge between a variety of multiprotein complexes, and which is involved in embryonic development, immunity, myogenesis and brain development. Plays a key role in nuclear protein degradation by promoting import of proteasomes into the nucleus: directly binds to fully assembled 20S proteasomes at one end and to nuclear import receptor IPO9 at the other end, bridging them together and mediating the import of pre-assembled proteasome complexes through the nuclear pore. Involved in innate immunity by regulating the production of interleukin-6 (IL6) downstream of Toll-like receptor (TLR): acts by bridging the NF-kappa-B inhibitor NFKBIZ and the SWI/SNF complex, leading to promote induction of IL6. Also involved in adaptive immunity by promoting B-cell activation. Involved in brain development: required for the survival and proliferation of cerebral cortical progenitor cells. Involved in myogenesis: required for skeletal muscle formation and skeletal development, possibly by regulating expression of muscle differentiation factors. Also plays a role in facilitating interdigital tissue regression during limb development. The polypeptide is Akirin-2 (Homo sapiens (Human)).